The sequence spans 144 residues: Universal stress protein F (144 aa).

It belongs to the universal stress protein A family. In terms of assembly, homodimer.

This is Universal stress protein F (uspF) from Escherichia coli O157:H7.